The sequence spans 428 residues: Chaperone SurA (428 aa).

Positions 1–13 are cleaved as a signal peptide; the sequence is MLGALLLSGAVHA. PpiC domains follow at residues 164–265 and 276–375; these read SEEF…KLLE and RDEV…EVLG.

It is found in the periplasm. The enzyme catalyses [protein]-peptidylproline (omega=180) = [protein]-peptidylproline (omega=0). Functionally, chaperone involved in the correct folding and assembly of outer membrane proteins. Recognizes specific patterns of aromatic residues and the orientation of their side chains, which are found more frequently in integral outer membrane proteins. May act in both early periplasmic and late outer membrane-associated steps of protein maturation. The protein is Chaperone SurA of Pseudomonas syringae pv. tomato (strain ATCC BAA-871 / DC3000).